We begin with the raw amino-acid sequence, 211 residues long: MIDSTTELRPLTKRQQQIYDLIKAKIQDTGMPPTRAEIANFFGFKSANAAEEHLKALAKKGYIEMLAGTSRGIRLVEEMLEAEGLPLIGRVAAGEPILAQEHIEEHYKMDGNLFHPAADYLLRVNGESMKDIGILDGDLLAVHQTTEVQNGQVVVARVENDVTVKRFKREGNVVYLHAENEDFSPIKVDLANQEFNIEGIAVGIIRSGRWM.

The H-T-H motif DNA-binding region spans 35–55 (RAEIANFFGFKSANAAEEHLK). Residues serine 128 and lysine 165 each act as for autocatalytic cleavage activity in the active site.

The protein belongs to the peptidase S24 family. As to quaternary structure, homodimer.

The enzyme catalyses Hydrolysis of Ala-|-Gly bond in repressor LexA.. Its function is as follows. Represses a number of genes involved in the response to DNA damage (SOS response), including recA and lexA. In the presence of single-stranded DNA, RecA interacts with LexA causing an autocatalytic cleavage which disrupts the DNA-binding part of LexA, leading to derepression of the SOS regulon and eventually DNA repair. In Colwellia psychrerythraea (strain 34H / ATCC BAA-681) (Vibrio psychroerythus), this protein is LexA repressor.